The following is a 381-amino-acid chain: Chaperone protein DnaJ (381 aa).

The J domain occupies 5–70 (DFYEVLGVSR…QKKAAYDQYG (66 aa)). The CR-type zinc finger occupies 136-214 (GVSKEIEVPT…CHGQGRKQKT (79 aa)). 8 residues coordinate Zn(2+): Cys149, Cys152, Cys166, Cys169, Cys188, Cys191, Cys202, and Cys205. 4 CXXCXGXG motif repeats span residues 149 to 156 (CDTCEGTG), 166 to 173 (CGTCHGHG), 188 to 195 (CPTCHGKG), and 202 to 209 (CNVCHGQG).

It belongs to the DnaJ family. As to quaternary structure, homodimer. It depends on Zn(2+) as a cofactor.

It is found in the cytoplasm. Functionally, participates actively in the response to hyperosmotic and heat shock by preventing the aggregation of stress-denatured proteins and by disaggregating proteins, also in an autonomous, DnaK-independent fashion. Unfolded proteins bind initially to DnaJ; upon interaction with the DnaJ-bound protein, DnaK hydrolyzes its bound ATP, resulting in the formation of a stable complex. GrpE releases ADP from DnaK; ATP binding to DnaK triggers the release of the substrate protein, thus completing the reaction cycle. Several rounds of ATP-dependent interactions between DnaJ, DnaK and GrpE are required for fully efficient folding. Also involved, together with DnaK and GrpE, in the DNA replication of plasmids through activation of initiation proteins. This Vibrio vulnificus (strain CMCP6) protein is Chaperone protein DnaJ.